Here is a 109-residue protein sequence, read N- to C-terminus: MPRIKSAIKRVQIAERNRLRNKATKAMVRALMKKVISLSTAYAANPQQETLQEIQAAMSAAFSRIDKAAKTGVLHKNTAARRKARLARIVKLSVASSEKSQAEALVEHG.

The protein belongs to the bacterial ribosomal protein bS20 family.

Functionally, binds directly to 16S ribosomal RNA. In Synechococcus sp. (strain JA-2-3B'a(2-13)) (Cyanobacteria bacterium Yellowstone B-Prime), this protein is Small ribosomal subunit protein bS20.